We begin with the raw amino-acid sequence, 263 residues long: Pyridoxine 5'-phosphate synthase (263 aa).

Asn-15 contacts 3-amino-2-oxopropyl phosphate. 17–18 contacts 1-deoxy-D-xylulose 5-phosphate; that stretch reads DH. A 3-amino-2-oxopropyl phosphate-binding site is contributed by Arg-26. The active-site Proton acceptor is His-51. Arg-53 and His-58 together coordinate 1-deoxy-D-xylulose 5-phosphate. The Proton acceptor role is filled by Glu-78. A 1-deoxy-D-xylulose 5-phosphate-binding site is contributed by Thr-108. The Proton donor role is filled by His-199. 3-amino-2-oxopropyl phosphate-binding positions include Gly-200 and 221-222; that span reads GH.

Belongs to the PNP synthase family. As to quaternary structure, homooctamer; tetramer of dimers.

It is found in the cytoplasm. It catalyses the reaction 3-amino-2-oxopropyl phosphate + 1-deoxy-D-xylulose 5-phosphate = pyridoxine 5'-phosphate + phosphate + 2 H2O + H(+). Its pathway is cofactor biosynthesis; pyridoxine 5'-phosphate biosynthesis; pyridoxine 5'-phosphate from D-erythrose 4-phosphate: step 5/5. Its function is as follows. Catalyzes the complicated ring closure reaction between the two acyclic compounds 1-deoxy-D-xylulose-5-phosphate (DXP) and 3-amino-2-oxopropyl phosphate (1-amino-acetone-3-phosphate or AAP) to form pyridoxine 5'-phosphate (PNP) and inorganic phosphate. The protein is Pyridoxine 5'-phosphate synthase of Ralstonia nicotianae (strain ATCC BAA-1114 / GMI1000) (Ralstonia solanacearum).